Here is a 485-residue protein sequence, read N- to C-terminus: Membrane-bound lytic murein transglycosylase F (485 aa).

An N-terminal signal peptide occupies residues 1-29 (MFAHTALRQRCAKWLFATGLFLLLGACVE). The segment at 30–267 (KPSTLERVKE…RLKDRYYGHV (238 aa)) is non-LT domain. The segment at 268–485 (DVLGYVGAYT…DKPAEQSPPM (218 aa)) is LT domain. Glu-314 is a catalytic residue. The disordered stretch occupies residues 465 to 485 (EGNLHVPGVNKDKPAEQSPPM).

The protein in the N-terminal section; belongs to the bacterial solute-binding protein 3 family. This sequence in the C-terminal section; belongs to the transglycosylase Slt family.

It is found in the cell outer membrane. It carries out the reaction Exolytic cleavage of the (1-&gt;4)-beta-glycosidic linkage between N-acetylmuramic acid (MurNAc) and N-acetylglucosamine (GlcNAc) residues in peptidoglycan, from either the reducing or the non-reducing ends of the peptidoglycan chains, with concomitant formation of a 1,6-anhydrobond in the MurNAc residue.. In terms of biological role, murein-degrading enzyme that degrades murein glycan strands and insoluble, high-molecular weight murein sacculi, with the concomitant formation of a 1,6-anhydromuramoyl product. Lytic transglycosylases (LTs) play an integral role in the metabolism of the peptidoglycan (PG) sacculus. Their lytic action creates space within the PG sacculus to allow for its expansion as well as for the insertion of various structures such as secretion systems and flagella. The sequence is that of Membrane-bound lytic murein transglycosylase F from Pseudomonas putida (strain W619).